Here is a 372-residue protein sequence, read N- to C-terminus: N-methyl-L-tryptophan oxidase (372 aa).

An FAD-binding site is contributed by 4–34; it reads DLIIIGSGSVGAAAGYYATRAGLNVLMTDAH. At C308 the chain carries S-8alpha-FAD cysteine.

The protein belongs to the MSOX/MTOX family. MTOX subfamily. Monomer. The cofactor is FAD.

It catalyses the reaction N(alpha)-methyl-L-tryptophan + O2 + H2O = L-tryptophan + formaldehyde + H2O2. Catalyzes the oxidative demethylation of N-methyl-L-tryptophan. The protein is N-methyl-L-tryptophan oxidase of Escherichia coli O17:K52:H18 (strain UMN026 / ExPEC).